A 119-amino-acid polypeptide reads, in one-letter code: MSINKNIARLRRAKSTRSHIRELGVARLSVLRTGQHLYAQVFTADGSKVIAAANTLQADVKDGLKNGKNSDAAVKVGKLIAERAKAAGIEKVAFDRSGYRYHGRIKALADAAREGGLQF.

Belongs to the universal ribosomal protein uL18 family. In terms of assembly, part of the 50S ribosomal subunit; part of the 5S rRNA/L5/L18/L25 subcomplex. Contacts the 5S and 23S rRNAs.

Its function is as follows. This is one of the proteins that bind and probably mediate the attachment of the 5S RNA into the large ribosomal subunit, where it forms part of the central protuberance. The protein is Large ribosomal subunit protein uL18 of Xanthomonas oryzae pv. oryzae (strain MAFF 311018).